A 195-amino-acid polypeptide reads, in one-letter code: Nuclear transcription factor Y subunit C-10 (195 aa).

Residues Met-1–Met-24 are disordered.

Belongs to the NFYC/HAP5 subunit family. Heterotrimeric transcription factor composed of three components, NF-YA, NF-YB and NF-YC. NF-YB and NF-YC must interact and dimerize for NF-YA association and DNA binding.

The protein localises to the nucleus. Its function is as follows. Stimulates the transcription of various genes by recognizing and binding to a CCAAT motif in promoters. The polypeptide is Nuclear transcription factor Y subunit C-10 (NFYC10) (Arabidopsis thaliana (Mouse-ear cress)).